Reading from the N-terminus, the 359-residue chain is Carbamoyl phosphate synthase small chain (359 aa).

The CPSase stretch occupies residues 1–169 (MTKRILVLED…TKTSYPAPGV (169 aa)). The L-glutamine site is built by Ser-46, Gly-220, and Gly-222. The Glutamine amidotransferase type-1 domain occupies 172 to 358 (SVVLVDFGLK…IEMMEVFKQS (187 aa)). Catalysis depends on Cys-247, which acts as the Nucleophile. L-glutamine is bound by residues Met-248, Gln-251, Asn-289, Gly-291, and Tyr-292. Residues His-331 and Asp-333 contribute to the active site.

It belongs to the CarA family. Composed of two chains; the small (or glutamine) chain promotes the hydrolysis of glutamine to ammonia, which is used by the large (or ammonia) chain to synthesize carbamoyl phosphate. Tetramer of heterodimers (alpha,beta)4.

It catalyses the reaction hydrogencarbonate + L-glutamine + 2 ATP + H2O = carbamoyl phosphate + L-glutamate + 2 ADP + phosphate + 2 H(+). The enzyme catalyses L-glutamine + H2O = L-glutamate + NH4(+). It functions in the pathway amino-acid biosynthesis; L-arginine biosynthesis; carbamoyl phosphate from bicarbonate: step 1/1. Its pathway is pyrimidine metabolism; UMP biosynthesis via de novo pathway; (S)-dihydroorotate from bicarbonate: step 1/3. Functionally, small subunit of the glutamine-dependent carbamoyl phosphate synthetase (CPSase). CPSase catalyzes the formation of carbamoyl phosphate from the ammonia moiety of glutamine, carbonate, and phosphate donated by ATP, constituting the first step of 2 biosynthetic pathways, one leading to arginine and/or urea and the other to pyrimidine nucleotides. The small subunit (glutamine amidotransferase) binds and cleaves glutamine to supply the large subunit with the substrate ammonia. The sequence is that of Carbamoyl phosphate synthase small chain from Streptococcus pneumoniae (strain ATCC BAA-255 / R6).